The following is a 405-amino-acid chain: Solute carrier family 35 member E2A (405 aa).

The tract at residues 1–22 (MSAAAKSQVPEEAAPGCEEEPK) is disordered. 10 helical membrane-spanning segments follow: residues 76–96 (LIYLTLWFFFSFCTLFLNKYI), 106–126 (MLGAVQMLSTTLIGCVKIFVP), 142–162 (FIMTMLFVGLMRFATVVLGLV), 167–187 (VAVSFAETVKSSAPIFTVIMS), 195–215 (TGLLVNLSLIPVMGGLALCTA), 219–241 (SFNILGFSAALSTNIMDCLQNVF), 264–284 (AAAVALLIPAWTFFMDIPVIG), 296–316 (IVLLLLTDGALFHLQSVTAYA), 326–346 (FSVASTVKHALSIWLSIIVFG), and 347–367 (NKITSLSAIGTILVTLGVLLY). Positions 380-405 (SLVTATSRNPEDDTEPLVPQDSRQHH) are disordered.

The protein belongs to the TPT transporter family. SLC35E subfamily.

It localises to the membrane. In terms of biological role, putative transporter. The protein is Solute carrier family 35 member E2A (Slc35e2a) of Mus musculus (Mouse).